Consider the following 463-residue polypeptide: 3-phosphoshikimate 1-carboxyvinyltransferase (463 aa).

Residues Lys-26, Ser-27, and Arg-31 each contribute to the 3-phosphoshikimate site. Phosphoenolpyruvate is bound at residue Lys-26. 2 residues coordinate phosphoenolpyruvate: Gly-99 and Arg-127. 6 residues coordinate 3-phosphoshikimate: Ser-163, Ser-164, Gln-165, Ser-188, Asp-300, and Lys-327. Residue Gln-165 participates in phosphoenolpyruvate binding. Residue Asp-300 is the Proton acceptor of the active site. Phosphoenolpyruvate-binding residues include Arg-331 and Arg-372.

It belongs to the EPSP synthase family. Monomer.

The protein localises to the cytoplasm. It catalyses the reaction 3-phosphoshikimate + phosphoenolpyruvate = 5-O-(1-carboxyvinyl)-3-phosphoshikimate + phosphate. The protein operates within metabolic intermediate biosynthesis; chorismate biosynthesis; chorismate from D-erythrose 4-phosphate and phosphoenolpyruvate: step 6/7. Its function is as follows. Catalyzes the transfer of the enolpyruvyl moiety of phosphoenolpyruvate (PEP) to the 5-hydroxyl of shikimate-3-phosphate (S3P) to produce enolpyruvyl shikimate-3-phosphate and inorganic phosphate. The polypeptide is 3-phosphoshikimate 1-carboxyvinyltransferase (Burkholderia pseudomallei (Pseudomonas pseudomallei)).